The primary structure comprises 145 residues: Large ribosomal subunit protein uL11 (145 aa).

It belongs to the universal ribosomal protein uL11 family. In terms of assembly, part of the ribosomal stalk of the 50S ribosomal subunit. Interacts with L10 and the large rRNA to form the base of the stalk. L10 forms an elongated spine to which L12 dimers bind in a sequential fashion forming a multimeric L10(L12)X complex. In terms of processing, one or more lysine residues are methylated.

Its function is as follows. Forms part of the ribosomal stalk which helps the ribosome interact with GTP-bound translation factors. The sequence is that of Large ribosomal subunit protein uL11 from Hydrogenobaculum sp. (strain Y04AAS1).